A 2364-amino-acid chain; its full sequence is Cytotoxin-L (2364 aa).

Residues 1-91 form a four-helical bundle region; sequence MSLVNKAQLQ…EVLELKNNSL (91 aa). A GT44 domain is found at 96 to 468; the sequence is KNLHFIWIGG…APDVRSTINL (373 aa). Positions 96–468 are glucosyltransferase region; the sequence is KNLHFIWIGG…APDVRSTINL (373 aa). UDP-alpha-D-glucose-binding positions include 101–103, N139, 265–270, and 286–288; these read IWI, LAAASD, and DVD. D288, E515, and S518 together coordinate Mg(2+). 518 to 520 serves as a coordination point for UDP-alpha-D-glucose; sequence SLW. The autoprocessing region stretch occupies residues 544–799; that stretch reads GEDDILDFSQ…KSKNLHELST (256 aa). Residues E545 and D546 each coordinate Zn(2+). Residues 567-774 enclose the Peptidase C80 domain; sequence SSSMRTPNKE…EESIIKDISS (208 aa). Positions 577, 600, and 647 each coordinate 1D-myo-inositol hexakisphosphate. H653 is a Zn(2+) binding site. Residue H653 is the For protease activity of the active site. The active-site Nucleophile; for protease activity is the C698. H757 contacts Zn(2+). 1D-myo-inositol hexakisphosphate-binding residues include K764, K775, and K792. The translocation region stretch occupies residues 800 to 1500; the sequence is LLQEIKNNSN…ESIIRNIYMP (701 aa). Interaction with host SEMA6A and SEMA6B regions lie at residues 1433 to 1438, 1466 to 1471, 1484 to 1495, 1504 to 1511, and 1596 to 1601; these read CIKLIE, DNETKY, FTAEFSNESIIR, NLFIYSSK, and YNNLDP. 19 Cell wall-binding repeats span residues 1833–1852, 1854–1873, 1876–1895, 1926–1945, 1946–1965, 1967–1986, 1987–2006, 2007–2026, 2057–2076, 2077–2097, 2099–2118, 2119–2138, 2139–2158, 2209–2224, 2227–2249, 2250–2269, 2270–2289, 2320–2339, and 2340–2359; these read VSGLIYINDSLYYFKPPKNN, ITGFTTIDDNKYYFDPTKSG, SIGEITIDGKDYYFNKQGIL, FIGKLNIDGKIYYFEDNYRA, AVEWKSLDGETYYFNPKTGE, LKGLHQIGDNKYYFDNNGIM, QTGFITINDKVFYFNNDGVM, QVGYIEVNGKYFYFGKNGER, YNGILNFNGKIYFFDISNTA, VVGWGILDDGSTYYFDDNTAE, CIGLTVINDCKYYFDDNGIR, QLGFITINDNIFYFSESGKI, ELGYQNINGNYFYIDESGLV, ETGWIENETDKYYFDP, KKAYKGINVVDDIKYYFDENGIM, KTGLISFENNNYYFNEDGKM, QFGYLNIKDKMFYFGKDGKM, YTGWLDLDGKRYYFTDEYIA, and ATSSLTIDGYNYYFDPDTAE. The receptor-binding (CROPS) region stretch occupies residues 1835 to 2364; that stretch reads GLIYINDSLY…PDTAELVVSE (530 aa).

It belongs to the clostridial glucosylating toxin (LCGT) family. As to quaternary structure, homomultimer; forms an inactive homomultimer at pH 8, which dissociates at pH 4, leading to cytotoxicity. Interacts with host SEMA6A; interaction promotes toxin entry into host cell. Interacts with host SEMA6B; interaction promotes toxin entry into host cell. Requires Zn(2+) as cofactor. Mn(2+) serves as cofactor. Mg(2+) is required as a cofactor. Undergoes autocatalytic cleavage to release the N-terminal part (Glucosyltransferase TcsL), which constitutes the active part of the toxin, in the host cytosol. 1D-myo-inositol hexakisphosphate-binding (InsP6) activates the peptidase C80 domain and promotes autoprocessing.

The protein localises to the secreted. The protein resides in the host endosome membrane. It is found in the host cytoplasm. Its subcellular location is the host cytosol. It localises to the host cell membrane. The enzyme catalyses L-threonyl-[protein] + UDP-alpha-D-glucose = 3-O-(alpha-D-glucosyl)-L-threonyl-[protein] + UDP + H(+). With respect to regulation, protease activity is activated upon binding to 1D-myo-inositol hexakisphosphate (InsP6), which induces conformational reorganization. Functionally, precursor of a cytotoxin that targets the vascular endothelium, inducing an anti-inflammatory effect and resulting in lethal toxic shock syndrome. TcsL constitutes the main toxin that mediates the pathology of P.sordellii infection, an anaerobic Gram-positive bacterium found in soil and in the gastrointestinal and vaginal tracts of animals and humans; although the majority of carriers are asymptomatic, pathogenic P.sordellii infections arise rapidly and are highly lethal. This form constitutes the precursor of the toxin: it enters into host cells and mediates autoprocessing to release the active toxin (Glucosyltransferase TcsL) into the host cytosol. Targets vascular endothelium by binding to the semaphorin proteins SEMA6A and SEMA6B, and enters host cells via clathrin-mediated endocytosis. Once entered into host cells, acidification in the endosome promotes the membrane insertion of the translocation region and formation of a pore, leading to translocation of the GT44 and peptidase C80 domains across the endosomal membrane. This activates the peptidase C80 domain and autocatalytic processing, releasing the N-terminal part (Glucosyltransferase TcsL), which constitutes the active part of the toxin, in the cytosol. In terms of biological role, active form of the toxin, which is released into the host cytosol following autoprocessing and inactivates small GTPases. Acts by mediating monoglucosylation of small GTPases of the Ras (H-Ras/HRAS, K-Ras/KRAS and N-Ras/NRAS) family in host cells at the conserved threonine residue located in the switch I region ('Thr-37/35'), using UDP-alpha-D-glucose as the sugar donor. Does not catalyze monoglucosylation of Ral/RALA. Also able to catalyze monoglucosylation of some members of the Rho family (Rac1 and Rap2A), but with less efficiency than with Ras proteins. Monoglucosylation of host small GTPases completely prevents the recognition of the downstream effector, blocking the GTPases in their inactive form and leading to apoptosis. Induces an anti-inflammatory effect, mainly by inactivating Ras proteins which results in blockage of the cell cycle and killing of immune cells. The absence or moderate local inflammatory response allows C.sordellii spreading in deep tissues, production of toxin which is released in the general circulation and causes a toxic shock syndrome. The sequence is that of Cytotoxin-L from Paraclostridium sordellii (Clostridium sordellii).